A 254-amino-acid polypeptide reads, in one-letter code: Persulfide dioxygenase ETHE1, mitochondrial (254 aa).

A mitochondrion-targeting transit peptide spans 1-7; sequence MAEAVLR. Residues Ser-14 and Ser-19 each carry the phosphoserine modification. Lys-66 carries the post-translational modification N6-acetyllysine. Positions 79, 135, and 154 each coordinate Fe cation. Lys-172 is subject to N6-acetyllysine; alternate. N6-succinyllysine; alternate is present on Lys-172.

It belongs to the metallo-beta-lactamase superfamily. Glyoxalase II family. As to quaternary structure, homodimer. Monomer. Interacts with TST. May interact with RELA. Fe(2+) is required as a cofactor. Ubiquitously expressed.

It localises to the cytoplasm. The protein localises to the nucleus. Its subcellular location is the mitochondrion matrix. It carries out the reaction S-sulfanylglutathione + O2 + H2O = sulfite + glutathione + 2 H(+). Glutathione increases enzyme activity. Its function is as follows. Sulfur dioxygenase that plays an essential role in hydrogen sulfide catabolism in the mitochondrial matrix. Hydrogen sulfide (H(2)S) is first oxidized by SQRDL, giving rise to cysteine persulfide residues. ETHE1 consumes molecular oxygen to catalyze the oxidation of the persulfide, once it has been transferred to a thiophilic acceptor, such as glutathione (R-SSH). Plays an important role in metabolic homeostasis in mitochondria by metabolizing hydrogen sulfide and preventing the accumulation of supraphysiological H(2)S levels that have toxic effects, due to the inhibition of cytochrome c oxidase. First described as a protein that can shuttle between the nucleus and the cytoplasm and suppress p53-induced apoptosis by sequestering the transcription factor RELA/NFKB3 in the cytoplasm and preventing its accumulation in the nucleus. The protein is Persulfide dioxygenase ETHE1, mitochondrial (ETHE1) of Homo sapiens (Human).